Reading from the N-terminus, the 598-residue chain is Integrator complex subunit 11 (598 aa).

Zn(2+) contacts are provided by His-68, His-70, Asp-72, His-73, His-157, and Asp-178. Positions 68–73 (HFHLDH) match the HXHXDH motif motif. The active site involves Glu-203. Residue His-414 participates in Zn(2+) binding. Positions 470 to 480 (PLPDAKRPRTM) match the Nuclear localization signal motif.

It belongs to the metallo-beta-lactamase superfamily. RNA-metabolizing metallo-beta-lactamase-like family. INTS11 subfamily. Component of the Integrator complex, composed of core subunits INTS1, INTS2, INTS3, INTS4, INTS5, INTS6, INTS7, INTS8, INTS9/RC74, INTS10, INTS11/CPSF3L, INTS12, INTS13, INTS14 and INTS15. The core complex associates with protein phosphatase 2A subunits PPP2CA and PPP2R1A, to form the Integrator-PP2A (INTAC) complex. INTS11 is part of the RNA endonuclease subcomplex, composed of INTS4, INTS9, INTS11 and inositol hexakisphosphate (InsP6). It depends on Zn(2+) as a cofactor.

The protein localises to the nucleus. Its subcellular location is the cytoplasm. Functionally, RNA endonuclease component of the integrator complex, a multiprotein complex that terminates RNA polymerase II (Pol II) transcription in the promoter-proximal region of genes. The integrator complex provides a quality checkpoint during transcription elongation by driving premature transcription termination of transcripts that are unfavorably configured for transcriptional elongation: the complex terminates transcription by (1) catalyzing dephosphorylation of the C-terminal domain (CTD) of Pol II subunit POLR2A/RPB1 and SUPT5H/SPT5, (2) degrading the exiting nascent RNA transcript via endonuclease activity and (3) promoting the release of Pol II from bound DNA. The integrator complex is also involved in terminating the synthesis of non-coding Pol II transcripts, such as enhancer RNAs (eRNAs), small nuclear RNAs (snRNAs), telomerase RNAs and long non-coding RNAs (lncRNAs). Within the integrator complex, INTS11 constitutes the RNA endonuclease subunit that degrades exiting nascent RNA transcripts. The sequence is that of Integrator complex subunit 11 (cpsf3l) from Danio rerio (Zebrafish).